The following is a 650-amino-acid chain: uncharacterized protein (650 aa).

It belongs to the mimivirus L515/L516 family.

The protein resides in the virion. This is an uncharacterized protein from Acanthamoeba polyphaga (Amoeba).